The primary structure comprises 285 residues: Probable nudix hydrolase C6G9.05 (285 aa).

In terms of domain architecture, Nudix hydrolase spans 114 to 254 (TRFASVLMPL…DLLYVEFNID (141 aa)). Positions 153-175 (GRVEPSDGSHYYAALRETYEEIG) match the Nudix box motif. Mg(2+) is bound by residues Glu-169 and Glu-173.

Belongs to the Nudix hydrolase family. PCD1 subfamily. Mn(2+) is required as a cofactor. Mg(2+) serves as cofactor.

In terms of biological role, probably mediates the hydrolysis of some nucleoside diphosphate derivatives. This is Probable nudix hydrolase C6G9.05 from Schizosaccharomyces pombe (strain 972 / ATCC 24843) (Fission yeast).